A 186-amino-acid polypeptide reads, in one-letter code: ADP-ribosylation factor-like protein 8A (186 aa).

Positions 1–19 (MLALFNKLLDWFRALFWKE) form an intramembrane region, note=Mediates targeting to membranes. GTP-binding positions include 29–35 (QYSGKTT), 71–75 (DIGGQ), and 130–133 (NKRD).

The protein belongs to the small GTPase superfamily. Arf family.

It is found in the late endosome membrane. Its subcellular location is the lysosome membrane. The protein localises to the cytoplasm. It localises to the cytoskeleton. The protein resides in the spindle. It is found in the cell projection. Its subcellular location is the axon. The protein localises to the synapse. Functionally, plays a role in lysosome motility. In neurons, mediates the anterograde axonal long-range transport of presynaptic lysosome-related vesicles required for presynaptic biogenesis and synaptic function. May play a role in chromosome segregation. In Gallus gallus (Chicken), this protein is ADP-ribosylation factor-like protein 8A (ARL8A).